Here is a 392-residue protein sequence, read N- to C-terminus: Elongation factor Tu (392 aa).

Positions 10–202 (KVHVNVGTIG…VLDEYIEDPI (193 aa)) constitute a tr-type G domain. Positions 19 to 26 (GHVDHGKT) are G1. 19–26 (GHVDHGKT) contacts GTP. Residue Thr26 participates in Mg(2+) binding. Positions 60 to 64 (GITIN) are G2. Positions 81–84 (DCPG) are G3. Residues 81-85 (DCPGH) and 136-139 (NKCD) contribute to the GTP site. The interval 136–139 (NKCD) is G4. Residues 174–176 (SAL) form a G5 region.

It belongs to the TRAFAC class translation factor GTPase superfamily. Classic translation factor GTPase family. EF-Tu/EF-1A subfamily. As to quaternary structure, monomer.

It is found in the cytoplasm. The enzyme catalyses GTP + H2O = GDP + phosphate + H(+). Functionally, GTP hydrolase that promotes the GTP-dependent binding of aminoacyl-tRNA to the A-site of ribosomes during protein biosynthesis. The sequence is that of Elongation factor Tu from Phytoplasma mali (strain AT).